The primary structure comprises 383 residues: tRNA-specific 2-thiouridylase MnmA (383 aa).

ATP-binding positions include glycine 9–serine 16 and methionine 35. The interaction with target base in tRNA stretch occupies residues asparagine 95–aspartate 97. The active-site Nucleophile is the cysteine 100. The cysteines at positions 100 and 196 are disulfide-linked. An ATP-binding site is contributed by glycine 124. Residues lysine 146–glutamine 148 form an interaction with tRNA region. The active-site Cysteine persulfide intermediate is cysteine 196. Positions arginine 308–tyrosine 309 are interaction with tRNA.

The protein belongs to the MnmA/TRMU family.

It is found in the cytoplasm. It carries out the reaction S-sulfanyl-L-cysteinyl-[protein] + uridine(34) in tRNA + AH2 + ATP = 2-thiouridine(34) in tRNA + L-cysteinyl-[protein] + A + AMP + diphosphate + H(+). Functionally, catalyzes the 2-thiolation of uridine at the wobble position (U34) of tRNA, leading to the formation of s(2)U34. The protein is tRNA-specific 2-thiouridylase MnmA of Burkholderia pseudomallei (strain 668).